Reading from the N-terminus, the 132-residue chain is CDGSH iron-sulfur domain-containing protein 2 homolog (132 aa).

At 1 to 35 (MEPISHVVKSSLPNYLSSLPIPDSFGGWFKLSFKD) the chain is on the lumenal side. A helical membrane pass occupies residues 36–58 (WLALIPPTVVVAGLGYTTYLAFC). The Cytoplasmic portion of the chain corresponds to 59 to 132 (PAARCAGKDS…NVGPVVVKKK (74 aa)). [2Fe-2S] cluster contacts are provided by Cys-98, Cys-100, Cys-109, and His-113.

It belongs to the CISD protein family. CISD2 subfamily. The cofactor is [2Fe-2S] cluster.

It is found in the endoplasmic reticulum membrane. In Drosophila persimilis (Fruit fly), this protein is CDGSH iron-sulfur domain-containing protein 2 homolog.